Consider the following 375-residue polypeptide: 23S rRNA (uracil(747)-C(5))-methyltransferase RlmC (375 aa).

[4Fe-4S] cluster-binding residues include Cys3, Cys11, Cys14, and Cys87. Positions 212, 241, 262, and 307 each coordinate S-adenosyl-L-methionine. Cys334 acts as the Nucleophile in catalysis.

It belongs to the class I-like SAM-binding methyltransferase superfamily. RNA M5U methyltransferase family. RlmC subfamily.

The enzyme catalyses uridine(747) in 23S rRNA + S-adenosyl-L-methionine = 5-methyluridine(747) in 23S rRNA + S-adenosyl-L-homocysteine + H(+). In terms of biological role, catalyzes the formation of 5-methyl-uridine at position 747 (m5U747) in 23S rRNA. In Salmonella dublin (strain CT_02021853), this protein is 23S rRNA (uracil(747)-C(5))-methyltransferase RlmC.